The chain runs to 97 residues: Protein 9b (97 aa).

One can recognise a 9b domain in the interval 8-97 (VLPALHLVDP…PDEFVVVTAK (90 aa)).

Belongs to the coronavirus group 2 protein 9b family. As to quaternary structure, homodimer.

The protein resides in the host cytoplasmic vesicle membrane. It is found in the host cytoplasm. The polypeptide is Protein 9b (Rhinolophus ferrumequinum (Greater horseshoe bat)).